Here is a 472-residue protein sequence, read N- to C-terminus: 6-phosphogluconate dehydrogenase, decarboxylating (472 aa).

NADP(+) contacts are provided by residues 10-15, 33-35, 74-76, and asparagine 102; these read GMAVMG, NRT, and VQA. Substrate contacts are provided by residues asparagine 102 and 128–130; that span reads SGG. Lysine 184 (proton acceptor) is an active-site residue. 187–188 contacts substrate; that stretch reads HN. The active-site Proton donor is glutamate 191. Substrate-binding residues include tyrosine 192, lysine 262, arginine 289, arginine 447, and histidine 453.

This sequence belongs to the 6-phosphogluconate dehydrogenase family. As to quaternary structure, homodimer.

The catalysed reaction is 6-phospho-D-gluconate + NADP(+) = D-ribulose 5-phosphate + CO2 + NADPH. Its pathway is carbohydrate degradation; pentose phosphate pathway; D-ribulose 5-phosphate from D-glucose 6-phosphate (oxidative stage): step 3/3. In terms of biological role, catalyzes the oxidative decarboxylation of 6-phosphogluconate to ribulose 5-phosphate and CO(2), with concomitant reduction of NADP to NADPH. The chain is 6-phosphogluconate dehydrogenase, decarboxylating (gnd) from Lactococcus lactis subsp. cremoris (strain MG1363).